Reading from the N-terminus, the 384-residue chain is Adaptive-response sensory kinase SasA (384 aa).

In terms of domain architecture, Histidine kinase spans 162 to 384; it reads MLAHDLRSPL…SFHFTLPVYR (223 aa). His165 carries the post-translational modification Phosphohistidine; by autocatalysis.

As to quaternary structure, homooligomerizes. Interacts with KaiC. Participates in the KaiABC clock complex, whose core is composed of a KaiC homohexamer, 6 KaiB and up to 6 KaiA dimers. SasA and KaiB(fs) compete to bind to KaiC.

It carries out the reaction ATP + protein L-histidine = ADP + protein N-phospho-L-histidine.. Its function is as follows. Member of the two-component regulatory system SasA/RpaA involved in genome-wide circadian gene expression. One of several clock output pathways. Participates in the Kai clock protein complex, the main circadian regulator in cyanobacteria, via its interaction with KaiC. KaiC enhances the autophosphorylation activity of SasA, which then transfers its phosphate group to RpaA to activate it. In addition to its output function, recruits fold-shifted KaiB (KaiB(fs)) to KaiC to cooperatively form the KaiB(6):KaiC(6) complex (independent of SasA kinase activity). Required for robustness of the circadian rhythm of gene expression and is involved in clock output, also required for adaptation to light/dark cycles. This Microcystis aeruginosa (strain NIES-843 / IAM M-2473) protein is Adaptive-response sensory kinase SasA.